The sequence spans 443 residues: ATP-dependent protease ATPase subunit HslU (443 aa).

Residues I18, 60–65 (GVGKTE), D256, E321, and R393 each bind ATP.

This sequence belongs to the ClpX chaperone family. HslU subfamily. As to quaternary structure, a double ring-shaped homohexamer of HslV is capped on each side by a ring-shaped HslU homohexamer. The assembly of the HslU/HslV complex is dependent on binding of ATP.

It localises to the cytoplasm. In terms of biological role, ATPase subunit of a proteasome-like degradation complex; this subunit has chaperone activity. The binding of ATP and its subsequent hydrolysis by HslU are essential for unfolding of protein substrates subsequently hydrolyzed by HslV. HslU recognizes the N-terminal part of its protein substrates and unfolds these before they are guided to HslV for hydrolysis. In Citrobacter koseri (strain ATCC BAA-895 / CDC 4225-83 / SGSC4696), this protein is ATP-dependent protease ATPase subunit HslU.